We begin with the raw amino-acid sequence, 133 residues long: Large ribosomal subunit protein bL12 (133 aa).

Belongs to the bacterial ribosomal protein bL12 family. Homodimer. Part of the ribosomal stalk of the 50S ribosomal subunit. Forms a multimeric L10(L12)X complex, where L10 forms an elongated spine to which 2 to 4 L12 dimers bind in a sequential fashion. Binds GTP-bound translation factors.

In terms of biological role, forms part of the ribosomal stalk which helps the ribosome interact with GTP-bound translation factors. Is thus essential for accurate translation. This is Large ribosomal subunit protein bL12 from Ehrlichia chaffeensis (strain ATCC CRL-10679 / Arkansas).